The following is a 109-amino-acid chain: Juvenile hormone esterase, isoform A (109 aa).

It belongs to the type-B carboxylesterase/lipase family. Fat body, the site of their biosynthesis, and the hemolymph where it is secreted.

It carries out the reaction juvenile hormone I + H2O = juvenile hormone I carboxylate + methanol + H(+). It catalyses the reaction juvenile hormone III + H2O = juvenile hormone III carboxylate + methanol + H(+). Functionally, JH esterase plays a crucial role in the decrease of JH activity in lepidopteran insects, by hydrolyzing the methyl ester of JH. It is also involved in the transport of JH. The chain is Juvenile hormone esterase, isoform A from Trichoplusia ni (Cabbage looper).